The chain runs to 146 residues: Large ribosomal subunit protein uL15 (146 aa).

The segment at 1 to 51 is disordered; the sequence is MKLHELKPAKGSRKVRNRVGRGTSSGNGKTSGRGQKGQKARSGGGVRLGFE. The segment covering 10-19 has biased composition (basic residues); that stretch reads KGSRKVRNRV. Composition is skewed to gly residues over residues 23–35 and 42–51; these read TSSG…GRGQ and SGGGVRLGFE.

This sequence belongs to the universal ribosomal protein uL15 family. As to quaternary structure, part of the 50S ribosomal subunit.

Its function is as follows. Binds to the 23S rRNA. This Streptococcus equi subsp. equi (strain 4047) protein is Large ribosomal subunit protein uL15.